A 584-amino-acid chain; its full sequence is Probable DNA ligase (584 aa).

ATP is bound at residue glutamate 248. The active-site N6-AMP-lysine intermediate is the lysine 250. 6 residues coordinate ATP: arginine 255, arginine 270, glutamate 299, phenylalanine 339, arginine 416, and lysine 422.

This sequence belongs to the ATP-dependent DNA ligase family. It depends on Mg(2+) as a cofactor.

It catalyses the reaction ATP + (deoxyribonucleotide)n-3'-hydroxyl + 5'-phospho-(deoxyribonucleotide)m = (deoxyribonucleotide)n+m + AMP + diphosphate.. In terms of biological role, DNA ligase that seals nicks in double-stranded DNA during DNA replication, DNA recombination and DNA repair. In Aquifex aeolicus (strain VF5), this protein is Probable DNA ligase.